A 178-amino-acid polypeptide reads, in one-letter code: Alkyl hydroperoxide reductase AhpD (178 aa).

The Proton donor role is filled by Cys130. Cysteines 130 and 133 form a disulfide. Cys133 serves as the catalytic Cysteine sulfenic acid (-SOH) intermediate.

Belongs to the AhpD family. In terms of assembly, homotrimer.

It carries out the reaction N(6)-[(R)-dihydrolipoyl]-L-lysyl-[lipoyl-carrier protein] + a hydroperoxide = N(6)-[(R)-lipoyl]-L-lysyl-[lipoyl-carrier protein] + an alcohol + H2O. Antioxidant protein with alkyl hydroperoxidase activity. Required for the reduction of the AhpC active site cysteine residues and for the regeneration of the AhpC enzyme activity. This is Alkyl hydroperoxide reductase AhpD from Mycolicibacterium paratuberculosis (strain ATCC BAA-968 / K-10) (Mycobacterium paratuberculosis).